We begin with the raw amino-acid sequence, 224 residues long: Germin-like protein 8-5 (224 aa).

A signal peptide spans 1–22 (MASPSSLCLLAALALISWQAMA). Residues C32 and C47 are joined by a disulfide bond. The Cupin type-1 domain occupies 62 to 212 (AKLDTPRKTN…AFQVEKGTID (151 aa)). N76 is a glycosylation site (N-linked (GlcNAc...) asparagine). Mn(2+) is bound by residues H109, H111, and E116. The N-linked (GlcNAc...) asparagine glycan is linked to N135. A Mn(2+)-binding site is contributed by H157.

This sequence belongs to the germin family. In terms of assembly, oligomer (believed to be a pentamer but probably hexamer).

The protein localises to the secreted. It is found in the extracellular space. It localises to the apoplast. Functionally, plays a role in broad-spectrum disease resistance. Probably has no oxalate oxidase activity even if the active site is conserved. The polypeptide is Germin-like protein 8-5 (Oryza sativa subsp. japonica (Rice)).